The chain runs to 177 residues: Large ribosomal subunit protein uL6 (177 aa).

This sequence belongs to the universal ribosomal protein uL6 family. As to quaternary structure, part of the 50S ribosomal subunit.

In terms of biological role, this protein binds to the 23S rRNA, and is important in its secondary structure. It is located near the subunit interface in the base of the L7/L12 stalk, and near the tRNA binding site of the peptidyltransferase center. The chain is Large ribosomal subunit protein uL6 from Rhizobium etli (strain CIAT 652).